The sequence spans 267 residues: Phosphatidylglycerol--prolipoprotein diacylglyceryl transferase (267 aa).

3 consecutive transmembrane segments (helical) span residues 18 to 38 (LSVR…MWFA), 57 to 77 (FLFY…VLFY), and 95 to 115 (GGMS…IFAW). Arginine 140 lines the a 1,2-diacyl-sn-glycero-3-phospho-(1'-sn-glycerol) pocket. The next 3 membrane-spanning stretches (helical) occupy residues 173–193 (SQLY…QWFI), 200–220 (GSVA…IEYF), and 233–253 (FISM…GLLI).

Belongs to the Lgt family.

Its subcellular location is the cell inner membrane. It catalyses the reaction L-cysteinyl-[prolipoprotein] + a 1,2-diacyl-sn-glycero-3-phospho-(1'-sn-glycerol) = an S-1,2-diacyl-sn-glyceryl-L-cysteinyl-[prolipoprotein] + sn-glycerol 1-phosphate + H(+). It functions in the pathway protein modification; lipoprotein biosynthesis (diacylglyceryl transfer). In terms of biological role, catalyzes the transfer of the diacylglyceryl group from phosphatidylglycerol to the sulfhydryl group of the N-terminal cysteine of a prolipoprotein, the first step in the formation of mature lipoproteins. In Pseudoalteromonas translucida (strain TAC 125), this protein is Phosphatidylglycerol--prolipoprotein diacylglyceryl transferase.